The chain runs to 198 residues: Heme oxygenase PigA (198 aa).

His26 provides a ligand contact to heme b.

Belongs to the heme oxygenase family.

It carries out the reaction heme b + 3 AH2 + 3 O2 + 2 H(+) = biliverdin IXbeta + CO + Fe(2+) + 3 A + 3 H2O. The catalysed reaction is heme b + 3 AH2 + 3 O2 + 3 H(+) = biliverdin IXdelta + CO + Fe(2+) + 3 A + 3 H2O. Involved in heme degradation. Catalyzes the degradation of heme to biliverdin, with the release of iron. Forms biliverdin delta (70%) and beta (30%). Under anaerobic conditions ferredoxin--NADP(+) reductase (fpr) can provide the necessary electrons; Bfd is not required. This chain is Heme oxygenase PigA, found in Pseudomonas aeruginosa (strain ATCC 15692 / DSM 22644 / CIP 104116 / JCM 14847 / LMG 12228 / 1C / PRS 101 / PAO1).